Consider the following 168-residue polypeptide: Probable acetolactate synthase small subunit (168 aa).

The 75-residue stretch at 10 to 84 folds into the ACT domain; that stretch reads IISALVEHKP…DVIKVRDLEP (75 aa).

This sequence belongs to the acetolactate synthase small subunit family. As to quaternary structure, dimer of large and small chains.

The catalysed reaction is 2 pyruvate + H(+) = (2S)-2-acetolactate + CO2. Its pathway is amino-acid biosynthesis; L-isoleucine biosynthesis; L-isoleucine from 2-oxobutanoate: step 1/4. It participates in amino-acid biosynthesis; L-valine biosynthesis; L-valine from pyruvate: step 1/4. The sequence is that of Probable acetolactate synthase small subunit (ilvH) from Methanothermobacter thermautotrophicus (strain ATCC 29096 / DSM 1053 / JCM 10044 / NBRC 100330 / Delta H) (Methanobacterium thermoautotrophicum).